A 234-amino-acid chain; its full sequence is Large ribosomal subunit protein uL1 (234 aa).

Belongs to the universal ribosomal protein uL1 family. Part of the 50S ribosomal subunit.

Functionally, binds directly to 23S rRNA. The L1 stalk is quite mobile in the ribosome, and is involved in E site tRNA release. Its function is as follows. Protein L1 is also a translational repressor protein, it controls the translation of the L11 operon by binding to its mRNA. The sequence is that of Large ribosomal subunit protein uL1 from Helicobacter acinonychis (strain Sheeba).